We begin with the raw amino-acid sequence, 447 residues long: N-succinylarginine dihydrolase (447 aa).

Residues 19 to 28, Asn110, and 137 to 138 contribute to the substrate site; these read AGLSFGNEAS and HR. Residue Glu174 is part of the active site. Arg212 provides a ligand contact to substrate. The active site involves His248. Substrate-binding residues include Asp250 and Asn359. Cys365 functions as the Nucleophile in the catalytic mechanism.

This sequence belongs to the succinylarginine dihydrolase family. In terms of assembly, homodimer.

It catalyses the reaction N(2)-succinyl-L-arginine + 2 H2O + 2 H(+) = N(2)-succinyl-L-ornithine + 2 NH4(+) + CO2. It participates in amino-acid degradation; L-arginine degradation via AST pathway; L-glutamate and succinate from L-arginine: step 2/5. Functionally, catalyzes the hydrolysis of N(2)-succinylarginine into N(2)-succinylornithine, ammonia and CO(2). The polypeptide is N-succinylarginine dihydrolase (Escherichia coli (strain K12 / MC4100 / BW2952)).